The chain runs to 520 residues: ATP synthase subunit alpha (520 aa).

ATP is bound at residue 169 to 176 (GDRKTGKT).

Belongs to the ATPase alpha/beta chains family. F-type ATPases have 2 components, CF(1) - the catalytic core - and CF(0) - the membrane proton channel. CF(1) has five subunits: alpha(3), beta(3), gamma(1), delta(1), epsilon(1). CF(0) has three main subunits: a(1), b(2) and c(9-12). The alpha and beta chains form an alternating ring which encloses part of the gamma chain. CF(1) is attached to CF(0) by a central stalk formed by the gamma and epsilon chains, while a peripheral stalk is formed by the delta and b chains.

It is found in the cell membrane. The enzyme catalyses ATP + H2O + 4 H(+)(in) = ADP + phosphate + 5 H(+)(out). Functionally, produces ATP from ADP in the presence of a proton gradient across the membrane. The alpha chain is a regulatory subunit. This Oenococcus oeni (strain ATCC BAA-331 / PSU-1) protein is ATP synthase subunit alpha.